Consider the following 354-residue polypeptide: Uroporphyrinogen decarboxylase (354 aa).

Substrate-binding positions include 25–29 (RQAGR), Phe44, Asp75, Tyr152, Thr207, and His330.

The protein belongs to the uroporphyrinogen decarboxylase family. As to quaternary structure, homodimer.

The protein localises to the cytoplasm. The enzyme catalyses uroporphyrinogen III + 4 H(+) = coproporphyrinogen III + 4 CO2. It participates in porphyrin-containing compound metabolism; protoporphyrin-IX biosynthesis; coproporphyrinogen-III from 5-aminolevulinate: step 4/4. Functionally, catalyzes the decarboxylation of four acetate groups of uroporphyrinogen-III to yield coproporphyrinogen-III. This chain is Uroporphyrinogen decarboxylase, found in Xanthomonas axonopodis pv. citri (strain 306).